We begin with the raw amino-acid sequence, 367 residues long: MTVMKFDLIKKEGKARRGKITFPRGDIQTPAFMPVGTYGAVKSLSPVELKEMGAEIILGNTFHLWLRPGTEIIKKHGSLHGFNGWDKPILTDSGGFQVFSLGKMRKLTEEGVTFKSPVNSSKVFLSPEISMQVQRDLGSDIVMCFDECTPYPATEKEAKESMELSMRWAKRSKEAHGDNPSALFGIIQGGMYEHLRDESLAKLKEIDFDGFAIGGLSVGEPKEDMIRILDHTAHQMPEDKPRYLMGVGTPKDLVEAVYRGVDMFDCVMPSRNARNGHIFTSEGVIKIRNSKYKDDTSPLDPNCDCYTCKNFTKSYLHHLDKTKEILGSRLNTIHNLTFYQNLMKSIRKALDEGRFSEFRKEFLASYK.

Residue aspartate 92 is the Proton acceptor of the active site. Residues 92–96 (DSGGF), aspartate 146, glutamine 188, and glycine 215 contribute to the substrate site. Positions 246-252 (GVGTPKD) are RNA binding. The Nucleophile role is filled by aspartate 265. Residues cysteine 303, cysteine 305, cysteine 308, and histidine 334 each coordinate Zn(2+).

This sequence belongs to the queuine tRNA-ribosyltransferase family. Homodimer. Within each dimer, one monomer is responsible for RNA recognition and catalysis, while the other monomer binds to the replacement base PreQ1. The cofactor is Zn(2+).

It catalyses the reaction 7-aminomethyl-7-carbaguanine + guanosine(34) in tRNA = 7-aminomethyl-7-carbaguanosine(34) in tRNA + guanine. The protein operates within tRNA modification; tRNA-queuosine biosynthesis. In terms of biological role, catalyzes the base-exchange of a guanine (G) residue with the queuine precursor 7-aminomethyl-7-deazaguanine (PreQ1) at position 34 (anticodon wobble position) in tRNAs with GU(N) anticodons (tRNA-Asp, -Asn, -His and -Tyr). Catalysis occurs through a double-displacement mechanism. The nucleophile active site attacks the C1' of nucleotide 34 to detach the guanine base from the RNA, forming a covalent enzyme-RNA intermediate. The proton acceptor active site deprotonates the incoming PreQ1, allowing a nucleophilic attack on the C1' of the ribose to form the product. After dissociation, two additional enzymatic reactions on the tRNA convert PreQ1 to queuine (Q), resulting in the hypermodified nucleoside queuosine (7-(((4,5-cis-dihydroxy-2-cyclopenten-1-yl)amino)methyl)-7-deazaguanosine). The protein is Queuine tRNA-ribosyltransferase of Francisella tularensis subsp. holarctica (strain FTNF002-00 / FTA).